The primary structure comprises 396 residues: Elongation factor Tu (396 aa).

The 196-residue stretch at 10-205 folds into the tr-type G domain; it reads KSHANIGTIG…AVDEYIPTPE (196 aa). The interval 19–26 is G1; that stretch reads GHVDHGKT. Residue 19–26 participates in GTP binding; that stretch reads GHVDHGKT. Position 26 (threonine 26) interacts with Mg(2+). The interval 61–65 is G2; that stretch reads GITIS. Positions 82-85 are G3; sequence DCPG. GTP-binding positions include 82–86 and 137–140; these read DCPGH and NKCD. The G4 stretch occupies residues 137–140; the sequence is NKCD. A G5 region spans residues 175–177; the sequence is SAL. The residue at position 385 (threonine 385) is a Phosphothreonine.

This sequence belongs to the TRAFAC class translation factor GTPase superfamily. Classic translation factor GTPase family. EF-Tu/EF-1A subfamily. As to quaternary structure, monomer. Interacts with BrxC. Phosphorylated on Thr-385 in vitro by PrkC in the presence of poly-L-lysine or myelin basic protein, dephosphorylated by PrpC.

The protein localises to the cytoplasm. It catalyses the reaction GTP + H2O = GDP + phosphate + H(+). Functionally, GTP hydrolase that promotes the GTP-dependent binding of aminoacyl-tRNA to the A-site of ribosomes during protein biosynthesis. In Bacillus subtilis (strain 168), this protein is Elongation factor Tu.